The chain runs to 384 residues: Mannitol-1-phosphate 5-dehydrogenase (384 aa).

Alanine 3–glycine 14 contacts NAD(+).

This sequence belongs to the mannitol dehydrogenase family.

It carries out the reaction D-mannitol 1-phosphate + NAD(+) = beta-D-fructose 6-phosphate + NADH + H(+). The protein is Mannitol-1-phosphate 5-dehydrogenase of Arthrobacter sp. (strain FB24).